We begin with the raw amino-acid sequence, 246 residues long: Ureidoacrylate amidohydrolase RutB (246 aa).

A disordered region spans residues 1–27; the sequence is MSAVTAAGYQAPQERSQSVTLPARPEP. Asp-41 functions as the Proton acceptor in the catalytic mechanism. Residue Lys-150 is part of the active site. Catalysis depends on Cys-183, which acts as the Nucleophile.

Belongs to the isochorismatase family. RutB subfamily.

The enzyme catalyses (Z)-3-ureidoacrylate + H2O + H(+) = (Z)-3-aminoacrylate + NH4(+) + CO2. It catalyses the reaction (Z)-3-ureidoacrylate + H2O = (Z)-3-aminoacrylate + carbamate + H(+). It carries out the reaction (Z)-2-methylureidoacrylate + H2O + H(+) = (Z)-2-methylaminoacrylate + NH4(+) + CO2. Its function is as follows. Hydrolyzes ureidoacrylate to form aminoacrylate and carbamate. The carbamate hydrolyzes spontaneously, thereby releasing one of the nitrogen atoms of the pyrimidine ring as ammonia and one of its carbon atoms as CO2. The chain is Ureidoacrylate amidohydrolase RutB from Rhizobium rhizogenes (strain K84 / ATCC BAA-868) (Agrobacterium radiobacter).